An 801-amino-acid chain; its full sequence is Elongation factor G, mitochondrial (801 aa).

A mitochondrion-targeting transit peptide spans 1–24 (MRCPSLARLPHRAISGLTRLPVRL). One can recognise a tr-type G domain in the interval 99 to 386 (SRIRNIGIAA…GVIDYLPNPS (288 aa)). GTP is bound by residues 108–115 (AHIDSGKT), 184–188 (DTPGH), and 238–241 (NKMD).

It belongs to the TRAFAC class translation factor GTPase superfamily. Classic translation factor GTPase family. EF-G/EF-2 subfamily.

It is found in the mitochondrion. It participates in protein biosynthesis; polypeptide chain elongation. Functionally, mitochondrial GTPase that catalyzes the GTP-dependent ribosomal translocation step during translation elongation. During this step, the ribosome changes from the pre-translocational (PRE) to the post-translocational (POST) state as the newly formed A-site-bound peptidyl-tRNA and P-site-bound deacylated tRNA move to the P and E sites, respectively. Catalyzes the coordinated movement of the two tRNA molecules, the mRNA and conformational changes in the ribosome. This chain is Elongation factor G, mitochondrial (mef1), found in Aspergillus clavatus (strain ATCC 1007 / CBS 513.65 / DSM 816 / NCTC 3887 / NRRL 1 / QM 1276 / 107).